The sequence spans 384 residues: Lipoprotein LprN (384 aa).

The signal sequence occupies residues 1–20 (MNRIWLRAIILTASSALLAG). The N-palmitoyl cysteine moiety is linked to residue C21. A lipid anchor (S-diacylglycerol cysteine) is attached at C21.

In terms of processing, lipidated upon expression in E.coli.

The protein resides in the cell membrane. Its function is as follows. Stimulates the host (mouse) immune response; lipidated protein produced in E.coli stimulates T-cell proliferation in mice previously sensitized with LprN. Spleenocytes from these mice produce increased amounts of TNF-alpha and IFN-gamma, as well as somewhat increased nitric oxide levels, upon subsequent challenge with LprN. Previously sensitized mice infected with M.tuberculosis have an exacerbated disease response, suggesting this lipoprotein may down-regulate the host's immune response. The sequence is that of Lipoprotein LprN (lprN) from Mycobacterium tuberculosis (strain ATCC 25618 / H37Rv).